We begin with the raw amino-acid sequence, 136 residues long: Histone H3.2 (136 aa).

Residues 1–43 (MARTKQTARKSTGGKAPRKQLATKAARKSAPATGGVKKPHRFR) form a disordered region. K5 carries the post-translational modification N6-methylated lysine. K10 carries the N6-acetyllysine; alternate modification. K10 is subject to N6-methylated lysine; alternate. S11 carries the phosphoserine modification. T12 carries the phosphothreonine modification. K15 bears the N6-acetyllysine mark. Residues K19 and K24 each carry the N6-acetyllysine; alternate modification. An N6-methylated lysine; alternate mark is found at K19 and K24. K28 carries the post-translational modification N6-methylated lysine. Position 29 is a phosphoserine (S29). The residue at position 37 (K37) is an N6-methylated lysine.

Belongs to the histone H3 family. The nucleosome is a histone octamer containing two molecules each of H2A, H2B, H3 and H4 assembled in one H3-H4 heterotetramer and two H2A-H2B heterodimers. The octamer wraps approximately 147 bp of DNA. Post-translationally, acetylation is generally linked to gene activation. Can be acetylated to form H3K9ac, H3K14ac, H3K18ac and H3K23ac. H3K9ac could compete with H3K9me and prevent gene silencing. H3K9ac is restricted to euchromatin. In terms of processing, methylated to form mainly H3K4me, H3K9me, H3K18me, H3K23me, H3K27me and H3K36me. H3K4me1/2/3, H3K9me3, H3K27me3 and H3K36me1/2/3 are typical marks for euchromatin, whereas heterochromatic chromocenters are enriched in H3K9me1/2 and H3K27me1/2. H2BK143ub1 is probably prerequisite for H3K4me. Can be phosphorylated to form H3S10ph, H3T11ph and H3S28ph.

Its subcellular location is the nucleus. It localises to the chromosome. Core component of nucleosome. Nucleosomes wrap and compact DNA into chromatin, limiting DNA accessibility to the cellular machineries which require DNA as a template. Histones thereby play a central role in transcription regulation, DNA repair, DNA replication and chromosomal stability. DNA accessibility is regulated via a complex set of post-translational modifications of histones, also called histone code, and nucleosome remodeling. The polypeptide is Histone H3.2 (Triticum aestivum (Wheat)).